Here is a 139-residue protein sequence, read N- to C-terminus: Peptide methionine sulfoxide reductase MsrB (139 aa).

Residues 14–137 form the MsrB domain; that stretch reads DEEWRRELTP…NSISLDFQPE (124 aa). 4 residues coordinate Zn(2+): Cys-53, Cys-56, Cys-102, and Cys-105. Cys-126 (nucleophile) is an active-site residue.

It belongs to the MsrB Met sulfoxide reductase family. It depends on Zn(2+) as a cofactor.

The catalysed reaction is L-methionyl-[protein] + [thioredoxin]-disulfide + H2O = L-methionyl-(R)-S-oxide-[protein] + [thioredoxin]-dithiol. This is Peptide methionine sulfoxide reductase MsrB from Leifsonia xyli subsp. xyli (strain CTCB07).